A 499-amino-acid chain; its full sequence is MAAASVSETSASQFSNILAEPSKSNGSMVRHSSSPYVVYPPDKPFLNSDLRRSPNKPTFAYPESNSRAIFSALKNLQDKIRRLELERIQAEESVKTLSKETIEYKKVLDEQIPERENSKNEESKHNQELTSQLLAAENKCNLLEKQLEYMRNMIKHAEMERTSVLEKQVSLERERQHDQTHVQNQLEKLDLLEQEYNKLTTMQALAEKKMQELEAKLRQEEQERKRMQAKAAQLQTGLEVNRLIYEDKATSCVPNTKRIKKKKSKPPEKKGSRNYFAVQPHYRLCLGDMPFVAGKSTSPSHAVVANVQHVLHLMKQHSKVLCNDRVVSSIPLAKQVSSRTGKSKKSATPPSSSSVNEELSEVLQTLQDEFGQMSFDHQQLAKLIQESPTVELKDNLECELEALVGRMEAKANQITKVRKYQAQLEKQKLEKQKKELKATRKTLDEEGNSSSRSTTTGTTNKKDFAKPRPGEKSRKNLQLLKDMQSIQNSLQSNSLCWDY.

A compositionally biased stretch (polar residues) spans 1 to 35 (MAAASVSETSASQFSNILAEPSKSNGSMVRHSSSP). Residues 1 to 58 (MAAASVSETSASQFSNILAEPSKSNGSMVRHSSSPYVVYPPDKPFLNSDLRRSPNKPT) are disordered. The residue at position 53 (Ser-53) is a Phosphoserine. Residues 58-239 (TFAYPESNSR…KAAQLQTGLE (182 aa)) form a centrosome localization domain (CLD) region. Positions 63-241 (ESNSRAIFSA…AQLQTGLEVN (179 aa)) form a coiled coil. The segment at 277 to 490 (AVQPHYRLCL…KDMQSIQNSL (214 aa)) is mediates interaction with microtubules. Disordered regions lie at residues 334 to 357 (KQVS…SVNE) and 431 to 476 (KQKK…SRKN). Residues 346–357 (SATPPSSSSVNE) are compositionally biased toward low complexity. The stretch at 389-450 (TVELKDNLEC…KTLDEEGNSS (62 aa)) forms a coiled coil. The segment covering 431–444 (KQKKELKATRKTLD) has biased composition (basic and acidic residues). The span at 449 to 459 (SSSRSTTTGTT) shows a compositional bias: low complexity. A compositionally biased stretch (basic and acidic residues) spans 460–474 (NKKDFAKPRPGEKSR).

The protein belongs to the translokin family. Homodimer and homooligomer. Interacts with FGF2 and RAP80. Does not interact with FGF1 or FGF2 isoform 24 kDa. Interacts with microtubules.

The protein localises to the nucleus. It is found in the cytoplasm. Its subcellular location is the cytoskeleton. The protein resides in the microtubule organizing center. It localises to the centrosome. In terms of biological role, centrosomal protein which may be required for microtubule attachment to centrosomes. May act by forming ring-like structures around microtubules. Mediates nuclear translocation and mitogenic activity of the internalized growth factor FGF2. The sequence is that of Centrosomal protein of 57 kDa (CEP57) from Bos taurus (Bovine).